We begin with the raw amino-acid sequence, 319 residues long: Acetyl-coenzyme A carboxylase carboxyl transferase subunit alpha (319 aa).

Residues 35–296 (NLDEEVQRLR…KAQLLIDLAE (262 aa)) enclose the CoA carboxyltransferase C-terminal domain.

This sequence belongs to the AccA family. In terms of assembly, acetyl-CoA carboxylase is a heterohexamer composed of biotin carboxyl carrier protein (AccB), biotin carboxylase (AccC) and two subunits each of ACCase subunit alpha (AccA) and ACCase subunit beta (AccD).

It is found in the cytoplasm. The enzyme catalyses N(6)-carboxybiotinyl-L-lysyl-[protein] + acetyl-CoA = N(6)-biotinyl-L-lysyl-[protein] + malonyl-CoA. Its pathway is lipid metabolism; malonyl-CoA biosynthesis; malonyl-CoA from acetyl-CoA: step 1/1. Component of the acetyl coenzyme A carboxylase (ACC) complex. First, biotin carboxylase catalyzes the carboxylation of biotin on its carrier protein (BCCP) and then the CO(2) group is transferred by the carboxyltransferase to acetyl-CoA to form malonyl-CoA. The protein is Acetyl-coenzyme A carboxylase carboxyl transferase subunit alpha of Photorhabdus laumondii subsp. laumondii (strain DSM 15139 / CIP 105565 / TT01) (Photorhabdus luminescens subsp. laumondii).